The chain runs to 126 residues: MAILGLGSDIVEIDRIAAVISRTGDRLARRVLSDNEWRQYQSHQQPVRFLAKRFAVKEAASKAFGTGIRGGLAFNQFEVYNDELGKPGLRFLEHAQEMAQKLGVAHVHVTLADERHYACATVIIES.

Residues Asp-9 and Glu-58 each coordinate Mg(2+).

Belongs to the P-Pant transferase superfamily. AcpS family. Mg(2+) serves as cofactor.

Its subcellular location is the cytoplasm. It catalyses the reaction apo-[ACP] + CoA = holo-[ACP] + adenosine 3',5'-bisphosphate + H(+). In terms of biological role, transfers the 4'-phosphopantetheine moiety from coenzyme A to a Ser of acyl-carrier-protein. The chain is Holo-[acyl-carrier-protein] synthase from Erwinia tasmaniensis (strain DSM 17950 / CFBP 7177 / CIP 109463 / NCPPB 4357 / Et1/99).